We begin with the raw amino-acid sequence, 219 residues long: Ras-related protein Rab-3B (219 aa).

N-acetylalanine is present on Ala-2. Residues Ser-31, Ser-32, Val-33, Gly-34, Lys-35, Thr-36, Ser-37, Pro-49, and Ser-53 each contribute to the GTP site. Thr-36 contacts Mg(2+). Positions 45–58 (DTFTPAFVSTVGID) match the Switch 1 motif. Residues Thr-54 and Asp-77 each coordinate Mg(2+). Positions 78-96 (TAGQERYRTITTAYYRGAM) match the Switch 2 motif. Gly-80 contacts GTP. Thr-86 is modified (phosphothreonine; by LRRK2). Asn-135, Lys-136, Asp-138, Ala-166, and Lys-167 together coordinate GTP. Phosphoserine occurs at positions 188 and 190. 2 S-geranylgeranyl cysteine lipidation sites follow: Cys-217 and Cys-219. At Cys-219 the chain carries Cysteine methyl ester.

The protein belongs to the small GTPase superfamily. Rab family. In terms of assembly, interacts with RIMS1, RIMS2, RPH3A and RPH3AL. The GTP-bound form interacts with GAS8/DRC4 (via coiled-coil domains). Interacts with GDI2, CHM and CHML; phosphorylation at Thr-86 disrupts these interactions. Interacts with MADD (via uDENN domain); the GTP-bound form is preferred for interaction. Requires Mg(2+) as cofactor. In terms of processing, phosphorylation of Thr-86 in the switch II region by LRRK2 prevents the association of RAB regulatory proteins, including CHM, CHML and RAB GDP dissociation inhibitor GDI2. Abundantly expressed in testis, lung and brain.

It localises to the cell membrane. It is found in the golgi apparatus. It carries out the reaction GTP + H2O = GDP + phosphate + H(+). With respect to regulation, regulated by guanine nucleotide exchange factors (GEFs) which promote the exchange of bound GDP for free GTP. Regulated by GTPase activating proteins (GAPs) which increase the GTP hydrolysis activity. Inhibited by GDP dissociation inhibitors (GDIs) which prevent Rab-GDP dissociation. In terms of biological role, the small GTPases Rab are key regulators of intracellular membrane trafficking, from the formation of transport vesicles to their fusion with membranes. Rabs cycle between an inactive GDP-bound form and an active GTP-bound form that is able to recruit to membranes different sets of downstream effectors directly responsible for vesicle formation, movement, tethering and fusion. The protein is Ras-related protein Rab-3B of Mus musculus (Mouse).